We begin with the raw amino-acid sequence, 252 residues long: MFKKLFRQDENILNSELAEDLPIPRHVAIIMDGNGRWAKKRFLPRIAGHKEGMDVVKRVTRYANAIGIDVLTLYAFSTENWKRPTDEVDFLMKLPVEFFDSFVPELIEENVRVNVMGYRENLPDHTMRAVEKAIADTAHCTGLTLNFALNYGGRSEIITAAKEAMKELELEGKSADDLTEEKLNDHLMSSGLGDPDLLIRTSGELRLSNFMLWQLAYSEFYFTDTHWPDFSKEDFLQAIIEYQNRSRRFGGL.

Residue D32 is part of the active site. D32 serves as a coordination point for Mg(2+). Substrate is bound by residues 33–36 (GNGR), W37, R45, H49, and 77–79 (STE). N80 (proton acceptor) is an active-site residue. Substrate-binding positions include W81, R83, R200, and 206 to 208 (RLS). E219 contributes to the Mg(2+) binding site.

The protein belongs to the UPP synthase family. As to quaternary structure, homodimer. Mg(2+) is required as a cofactor.

Catalyzes the condensation of isopentenyl diphosphate (IPP) with allylic pyrophosphates generating different type of terpenoids. The polypeptide is Isoprenyl transferase (Listeria monocytogenes serovar 1/2a (strain ATCC BAA-679 / EGD-e)).